The chain runs to 195 residues: Ribosome maturation factor RimM (195 aa).

The PRC barrel domain maps to 101–191 (ADEWYPKDLI…YLTLDPPGGL (91 aa)).

The protein belongs to the RimM family. As to quaternary structure, binds ribosomal protein uS19.

The protein localises to the cytoplasm. An accessory protein needed during the final step in the assembly of 30S ribosomal subunit, possibly for assembly of the head region. Essential for efficient processing of 16S rRNA. May be needed both before and after RbfA during the maturation of 16S rRNA. It has affinity for free ribosomal 30S subunits but not for 70S ribosomes. In Bifidobacterium adolescentis (strain ATCC 15703 / DSM 20083 / NCTC 11814 / E194a), this protein is Ribosome maturation factor RimM.